Consider the following 424-residue polypeptide: Histidine--tRNA ligase (424 aa).

Belongs to the class-II aminoacyl-tRNA synthetase family. Homodimer.

It is found in the cytoplasm. It carries out the reaction tRNA(His) + L-histidine + ATP = L-histidyl-tRNA(His) + AMP + diphosphate + H(+). The polypeptide is Histidine--tRNA ligase (Shewanella sediminis (strain HAW-EB3)).